We begin with the raw amino-acid sequence, 379 residues long: uncharacterized protein (379 aa).

3 disordered regions span residues 1 to 37, 130 to 150, and 332 to 379; these read MSSI…SGQT, VRYS…LSPE, and NPPI…RGSR.

It belongs to the chlamydial CPn_0499/CT_392/TC_0671 family.

This is an uncharacterized protein from Chlamydia muridarum (strain MoPn / Nigg).